A 70-amino-acid chain; its full sequence is Chondroitin proteoglycan 9 (70 aa).

Residues 1–19 (MNFWHLLLLAVLFFVTVFG) form the signal peptide. 2 O-linked (Xyl...) (chondroitin sulfate) serine glycosylation sites follow: S25 and S27.

The chain is Chondroitin proteoglycan 9 (cpg-9) from Caenorhabditis briggsae.